The chain runs to 268 residues: Mesoderm posterior protein 1 (268 aa).

The interval 17 to 93 (AAWGPTRRPP…RQSASEREKL (77 aa)) is disordered. A compositionally biased stretch (polar residues) spans 36–48 (LVSSPDSWGSTPA). A compositionally biased stretch (low complexity) spans 66-86 (APSVGRRGARSSRLGSGQRQS). A bHLH domain is found at 82–136 (GQRQSASEREKLRMRTLARALHELRRFLPPSVAPAGQSLTKIETLRLAIRYIGHL). Residues 163-167 (CPLCP) carry the CPLCP motif. 2 tandem repeats follow at residues 182 to 183 (GQ) and 184 to 185 (GQ). Residues 182-185 (GQGQ) are 2 X 2 AA tandem repeats of G-Q.

Its subcellular location is the nucleus. Functionally, transcription factor. Plays a role in the epithelialization of somitic mesoderm and in the development of cardiac mesoderm. Defines the rostrocaudal patterning of the somites by participating in distinct Notch pathways. The chain is Mesoderm posterior protein 1 (MESP1) from Homo sapiens (Human).